Here is a 428-residue protein sequence, read N- to C-terminus: Elongation factor 1-alpha (428 aa).

Positions 5 to 217 (KPHVNIVFIG…DQIPEPEKPI (213 aa)) constitute a tr-type G domain. Residues 14–21 (GHVDHGKS) are G1. 14–21 (GHVDHGKS) lines the GTP pocket. Ser21 provides a ligand contact to Mg(2+). A G2 region spans residues 68 to 72 (GITID). A G3 region spans residues 89 to 92 (DAPG). GTP contacts are provided by residues 89–93 (DAPGH) and 144–147 (NKMD). The G4 stretch occupies residues 144-147 (NKMD). The segment at 181 to 183 (SAW) is G5.

Belongs to the TRAFAC class translation factor GTPase superfamily. Classic translation factor GTPase family. EF-Tu/EF-1A subfamily.

Its subcellular location is the cytoplasm. It catalyses the reaction GTP + H2O = GDP + phosphate + H(+). GTP hydrolase that promotes the GTP-dependent binding of aminoacyl-tRNA to the A-site of ribosomes during protein biosynthesis. In Pyrococcus horikoshii (strain ATCC 700860 / DSM 12428 / JCM 9974 / NBRC 100139 / OT-3), this protein is Elongation factor 1-alpha.